Here is a 226-residue protein sequence, read N- to C-terminus: Imidazole glycerol phosphate synthase subunit HisH (226 aa).

A Glutamine amidotransferase type-1 domain is found at 6–214 (NIALVDYGVG…VERAASRSAA (209 aa)). The Nucleophile role is filled by Cys84. Residues His189 and Glu191 contribute to the active site.

Heterodimer of HisH and HisF.

It is found in the cytoplasm. The enzyme catalyses 5-[(5-phospho-1-deoxy-D-ribulos-1-ylimino)methylamino]-1-(5-phospho-beta-D-ribosyl)imidazole-4-carboxamide + L-glutamine = D-erythro-1-(imidazol-4-yl)glycerol 3-phosphate + 5-amino-1-(5-phospho-beta-D-ribosyl)imidazole-4-carboxamide + L-glutamate + H(+). It catalyses the reaction L-glutamine + H2O = L-glutamate + NH4(+). Its pathway is amino-acid biosynthesis; L-histidine biosynthesis; L-histidine from 5-phospho-alpha-D-ribose 1-diphosphate: step 5/9. Functionally, IGPS catalyzes the conversion of PRFAR and glutamine to IGP, AICAR and glutamate. The HisH subunit catalyzes the hydrolysis of glutamine to glutamate and ammonia as part of the synthesis of IGP and AICAR. The resulting ammonia molecule is channeled to the active site of HisF. This is Imidazole glycerol phosphate synthase subunit HisH from Gloeobacter violaceus (strain ATCC 29082 / PCC 7421).